The primary structure comprises 279 residues: Movement protein (279 aa).

The protein belongs to the cucumovirus movement protein family.

Its subcellular location is the host cell junction. It localises to the host plasmodesma. In terms of biological role, transports viral genome to neighboring plant cells directly through plasmosdesmata, without any budding. The movement protein allows efficient cell to cell propagation, by bypassing the host cell wall barrier. Acts by forming a tubular structure at the host plasmodesmata, enlarging it enough to allow free passage of virion capsids. The chain is Movement protein from Cucumber mosaic virus (strain M) (CMV).